The chain runs to 229 residues: MSKNSVIIVAAGKGKRMNSSISKQFLQIKNKPILYYTLSKFSTHESIDEIVLVTLEDKIEVCSDIIDKYNINKVSKIVPGGKERQDSVYNGLKGVSKDCEVVLIHDAARPFVTSDIIENGIRYTNQYGAAACGVIPKDTIKIKNEKGFAIDTPNREDLFIVQTPQCFNYNIILSCHEKLKKHNKKVTDDTMVLENYGKSVYLYEGSYSNIKITTPEDLILGEQILEKLT.

The protein belongs to the IspD/TarI cytidylyltransferase family. IspD subfamily.

It carries out the reaction 2-C-methyl-D-erythritol 4-phosphate + CTP + H(+) = 4-CDP-2-C-methyl-D-erythritol + diphosphate. The protein operates within isoprenoid biosynthesis; isopentenyl diphosphate biosynthesis via DXP pathway; isopentenyl diphosphate from 1-deoxy-D-xylulose 5-phosphate: step 2/6. Functionally, catalyzes the formation of 4-diphosphocytidyl-2-C-methyl-D-erythritol from CTP and 2-C-methyl-D-erythritol 4-phosphate (MEP). In Clostridium botulinum (strain ATCC 19397 / Type A), this protein is 2-C-methyl-D-erythritol 4-phosphate cytidylyltransferase.